The primary structure comprises 124 residues: Small ribosomal subunit protein uS12 (124 aa).

Asp-89 is modified (3-methylthioaspartic acid). The disordered stretch occupies residues 105-124 (SGVSDRRQGRSKYGAKRPKS). Positions 113–124 (GRSKYGAKRPKS) are enriched in basic residues.

Belongs to the universal ribosomal protein uS12 family. In terms of assembly, part of the 30S ribosomal subunit. Contacts proteins S8 and S17. May interact with IF1 in the 30S initiation complex.

With S4 and S5 plays an important role in translational accuracy. Functionally, interacts with and stabilizes bases of the 16S rRNA that are involved in tRNA selection in the A site and with the mRNA backbone. Located at the interface of the 30S and 50S subunits, it traverses the body of the 30S subunit contacting proteins on the other side and probably holding the rRNA structure together. The combined cluster of proteins S8, S12 and S17 appears to hold together the shoulder and platform of the 30S subunit. The polypeptide is Small ribosomal subunit protein uS12 (Colwellia psychrerythraea (strain 34H / ATCC BAA-681) (Vibrio psychroerythus)).